A 383-amino-acid polypeptide reads, in one-letter code: MTKRRVVVGMSGGVDSSVTAWLLKEQGYDVVGLFMKNWEDDDDGEYCSTRQDWIDVVSVADLIGIDVEAVNFAAEYKDRVFAEFLREYSAGRTPNPDVLCNAEIKFKAFLDHAMSLGAQTIATGHYARVRERDGRFELLKAFDHTKDQSYFLHRLNQAQLSKTMFPLGEIPKTRVREIAAQIGLPNAKKKDSTGICFIGERPFRDFLNRYLPTKPGPMKTPDGKTVGEHIGLAFYTFGQRKGIGLGGSKDGSGEPWFVAAKDIASNTLYVVQGHDHPWLRSRELVAGNVSWVAGEPPADGARCGAKTRYRQADAPCAFGRAAQAGDERFSLVFDEPQWAVTPGQSAVLYDGDVCLGGGIIESAATGRAGTAPAGRAPALVEAR.

Residues 9–16 and methionine 35 each bind ATP; that span reads GMSGGVDS. Positions 95–97 are interaction with target base in tRNA; the sequence is NPD. Cysteine 100 serves as the catalytic Nucleophile. A disulfide bridge connects residues cysteine 100 and cysteine 196. Glycine 124 is a binding site for ATP. The interval 146–148 is interaction with tRNA; the sequence is KDQ. The Cysteine persulfide intermediate role is filled by cysteine 196. The interaction with tRNA stretch occupies residues 308–309; it reads RY.

Belongs to the MnmA/TRMU family.

Its subcellular location is the cytoplasm. The enzyme catalyses S-sulfanyl-L-cysteinyl-[protein] + uridine(34) in tRNA + AH2 + ATP = 2-thiouridine(34) in tRNA + L-cysteinyl-[protein] + A + AMP + diphosphate + H(+). Catalyzes the 2-thiolation of uridine at the wobble position (U34) of tRNA, leading to the formation of s(2)U34. The polypeptide is tRNA-specific 2-thiouridylase MnmA (Burkholderia pseudomallei (strain 668)).